Reading from the N-terminus, the 179-residue chain is Probable WRKY transcription factor 24 (179 aa).

A DNA-binding region (WRKY) is located at residues 92 to 157 (SDDDVLDDGY…YEGVHNHPCE (66 aa)).

This sequence belongs to the WRKY group II-c family.

Its subcellular location is the nucleus. Functionally, transcription factor. Interacts specifically with the W box (5'-(T)TGAC[CT]-3'), a frequently occurring elicitor-responsive cis-acting element. The sequence is that of Probable WRKY transcription factor 24 (WRKY24) from Arabidopsis thaliana (Mouse-ear cress).